An 86-amino-acid polypeptide reads, in one-letter code: Large ribosomal subunit protein bL27 (86 aa).

A disordered region spans residues 1-20; it reads MAHKKAGGSSRNGRDSESKR.

Belongs to the bacterial ribosomal protein bL27 family.

The protein is Large ribosomal subunit protein bL27 of Paraburkholderia phymatum (strain DSM 17167 / CIP 108236 / LMG 21445 / STM815) (Burkholderia phymatum).